The primary structure comprises 71 residues: DNA-directed RNA polymerases I, II, and III subunit RPABC5 (71 aa).

Residues C7, C10, C44, and C45 each contribute to the Zn(2+) site.

This sequence belongs to the archaeal Rpo10/eukaryotic RPB10 RNA polymerase subunit family. In terms of assembly, component of the RNA polymerase I (Pol I), RNA polymerase II (Pol II) and RNA polymerase III (Pol III) complexes consisting of at least 13, 12 and 17 subunits, respectively.

It localises to the nucleus. Its function is as follows. DNA-dependent RNA polymerase catalyzes the transcription of DNA into RNA using the four ribonucleoside triphosphates as substrates. Common component of RNA polymerases I, II and III which synthesize ribosomal RNA precursors, mRNA precursors and many functional non-coding RNAs, and a small RNAs, such as 5S rRNA and tRNAs, respectively. Pol II is the central component of the basal RNA polymerase II transcription machinery. Pols are composed of mobile elements that move relative to each other. In Pol II, RBP10 is part of the core element with the central large cleft. In Brassica napus (Rape), this protein is DNA-directed RNA polymerases I, II, and III subunit RPABC5.